We begin with the raw amino-acid sequence, 106 residues long: Large ribosomal subunit protein uL24 (106 aa).

It belongs to the universal ribosomal protein uL24 family. Part of the 50S ribosomal subunit.

Its function is as follows. One of two assembly initiator proteins, it binds directly to the 5'-end of the 23S rRNA, where it nucleates assembly of the 50S subunit. One of the proteins that surrounds the polypeptide exit tunnel on the outside of the subunit. The chain is Large ribosomal subunit protein uL24 from Syntrophus aciditrophicus (strain SB).